Here is a 171-residue protein sequence, read N- to C-terminus: 3-hydroxydecanoyl-[acyl-carrier-protein] dehydratase (171 aa).

H71 is an active-site residue.

This sequence belongs to the thioester dehydratase family. FabA subfamily. As to quaternary structure, homodimer.

The protein localises to the cytoplasm. The enzyme catalyses a (3R)-hydroxyacyl-[ACP] = a (2E)-enoyl-[ACP] + H2O. The catalysed reaction is (3R)-hydroxydecanoyl-[ACP] = (2E)-decenoyl-[ACP] + H2O. It carries out the reaction (2E)-decenoyl-[ACP] = (3Z)-decenoyl-[ACP]. It participates in lipid metabolism; fatty acid biosynthesis. Functionally, necessary for the introduction of cis unsaturation into fatty acids. Catalyzes the dehydration of (3R)-3-hydroxydecanoyl-ACP to E-(2)-decenoyl-ACP and then its isomerization to Z-(3)-decenoyl-ACP. Can catalyze the dehydratase reaction for beta-hydroxyacyl-ACPs with saturated chain lengths up to 16:0, being most active on intermediate chain length. This Agrobacterium fabrum (strain C58 / ATCC 33970) (Agrobacterium tumefaciens (strain C58)) protein is 3-hydroxydecanoyl-[acyl-carrier-protein] dehydratase.